Consider the following 178-residue polypeptide: Large ribosomal subunit protein uL16 (178 aa).

Belongs to the universal ribosomal protein uL16 family.

The polypeptide is Large ribosomal subunit protein uL16 (Pyrobaculum calidifontis (strain DSM 21063 / JCM 11548 / VA1)).